Here is a 919-residue protein sequence, read N- to C-terminus: Glutamate receptor ionotropic, kainate 3 (919 aa).

The N-terminal stretch at 1–31 (MTAPWRRLRSLVWEYWAGLLVCAFWIPDSRG) is a signal peptide. Topologically, residues 32–563 (MPHVIRIGGI…VFSFLNPLSP (532 aa)) are extracellular. N-linked (GlcNAc...) asparagine glycosylation is found at N70, N76, N278, N381, N415, N426, and N433. Residues C99 and C350 are joined by a disulfide bond. Positions 518, 520, and 525 each coordinate L-glutamate. N-linked (GlcNAc...) asparagine glycans are attached at residues N548 and N551. A helical membrane pass occupies residues 564-584 (DIWMYVLLAYLGVSCVLFVIA). The Cytoplasmic segment spans residues 585 to 636 (RFSPYEWYDAHPCNPGSEVVENNFTLLNSFWFGMGSLMQQGSELMPKALSTR). Residues 637 to 657 (IIGGIWWFFTLIIISSYTANL) form a helical membrane-spanning segment. Residues 658-820 (AAFLTVERME…KEASALGIQK (163 aa)) lie on the Extracellular side of the membrane. 3 residues coordinate L-glutamate: A691, T692, and E739. N-linked (GlcNAc...) asparagine glycosylation occurs at N752. Residues 821-841 (IGGIFIVLAAGLVLSVLVAVG) traverse the membrane as a helical segment. Over 842-919 (EFVYKLRKTA…CSTSLAPVFP (78 aa)) the chain is Cytoplasmic. A Phosphoserine modification is found at S869. A Glycyl lysine isopeptide (Lys-Gly) (interchain with G-Cter in SUMO1) cross-link involves residue K887.

It belongs to the glutamate-gated ion channel (TC 1.A.10.1) family. GRIK3 subfamily. In terms of assembly, homotetramer, and heterotetramer with either GRIK4 or GRIK5. Can form functional heteromeric receptors with GRIK2. Interacts with PRKCABP. Interacts with NETO2.

The protein resides in the cell membrane. It is found in the postsynaptic cell membrane. The catalysed reaction is Ca(2+)(in) = Ca(2+)(out). Ionotropic glutamate receptor that functions as a cation-permeable ligand-gated ion channel, gated by L-glutamate and the glutamatergic agonist kainic acid. Binding of the excitatory neurotransmitter L-glutamate induces a conformation change, leading to the opening of the cation channel, and thereby converts the chemical signal to an electrical impulse. The receptor then desensitizes rapidly and enters a transient inactive state, characterized by the presence of bound agonist. In association with GRIK2, involved in presynaptic facilitation of glutamate release at hippocampal mossy fiber synapses. In Homo sapiens (Human), this protein is Glutamate receptor ionotropic, kainate 3 (GRIK3).